The primary structure comprises 107 residues: Large ribosomal subunit protein uL24 (107 aa).

The protein belongs to the universal ribosomal protein uL24 family. As to quaternary structure, part of the 50S ribosomal subunit.

Functionally, one of two assembly initiator proteins, it binds directly to the 5'-end of the 23S rRNA, where it nucleates assembly of the 50S subunit. Its function is as follows. One of the proteins that surrounds the polypeptide exit tunnel on the outside of the subunit. The polypeptide is Large ribosomal subunit protein uL24 (Coxiella burnetii (strain Dugway 5J108-111)).